We begin with the raw amino-acid sequence, 432 residues long: Gamma-glutamyl phosphate reductase (432 aa).

Belongs to the gamma-glutamyl phosphate reductase family.

Its subcellular location is the cytoplasm. The catalysed reaction is L-glutamate 5-semialdehyde + phosphate + NADP(+) = L-glutamyl 5-phosphate + NADPH + H(+). It participates in amino-acid biosynthesis; L-proline biosynthesis; L-glutamate 5-semialdehyde from L-glutamate: step 2/2. Catalyzes the NADPH-dependent reduction of L-glutamate 5-phosphate into L-glutamate 5-semialdehyde and phosphate. The product spontaneously undergoes cyclization to form 1-pyrroline-5-carboxylate. The protein is Gamma-glutamyl phosphate reductase of Corynebacterium glutamicum (strain R).